The sequence spans 239 residues: Probable transcriptional regulatory protein Ajs_1898 (239 aa).

Positions 1-21 (MAGHSKWANIQHRKGRQDEKR) are disordered.

The protein belongs to the TACO1 family.

It is found in the cytoplasm. This is Probable transcriptional regulatory protein Ajs_1898 from Acidovorax sp. (strain JS42).